We begin with the raw amino-acid sequence, 100 residues long: MKISEEEVRHVATLSKLAFSEEETSQFATTLTKIVDMVELLNEVDTEGVAITTTMADRKNVMRPDLAQAGTNREDLFKNVPEKENNFIKVPAILEDGGDA.

This sequence belongs to the GatC family. Heterotrimer of A, B and C subunits.

The catalysed reaction is L-glutamyl-tRNA(Gln) + L-glutamine + ATP + H2O = L-glutaminyl-tRNA(Gln) + L-glutamate + ADP + phosphate + H(+). It carries out the reaction L-aspartyl-tRNA(Asn) + L-glutamine + ATP + H2O = L-asparaginyl-tRNA(Asn) + L-glutamate + ADP + phosphate + 2 H(+). In terms of biological role, allows the formation of correctly charged Asn-tRNA(Asn) or Gln-tRNA(Gln) through the transamidation of misacylated Asp-tRNA(Asn) or Glu-tRNA(Gln) in organisms which lack either or both of asparaginyl-tRNA or glutaminyl-tRNA synthetases. The reaction takes place in the presence of glutamine and ATP through an activated phospho-Asp-tRNA(Asn) or phospho-Glu-tRNA(Gln). This is Aspartyl/glutamyl-tRNA(Asn/Gln) amidotransferase subunit C from Streptococcus uberis (strain ATCC BAA-854 / 0140J).